A 431-amino-acid polypeptide reads, in one-letter code: Glutamate-1-semialdehyde 2,1-aminomutase (431 aa).

Residue K267 is modified to N6-(pyridoxal phosphate)lysine.

This sequence belongs to the class-III pyridoxal-phosphate-dependent aminotransferase family. HemL subfamily. In terms of assembly, homodimer. Requires pyridoxal 5'-phosphate as cofactor.

The protein localises to the cytoplasm. The catalysed reaction is (S)-4-amino-5-oxopentanoate = 5-aminolevulinate. The protein operates within porphyrin-containing compound metabolism; protoporphyrin-IX biosynthesis; 5-aminolevulinate from L-glutamyl-tRNA(Glu): step 2/2. The sequence is that of Glutamate-1-semialdehyde 2,1-aminomutase from Myxococcus xanthus (strain DK1622).